The sequence spans 158 residues: 6,7-dimethyl-8-ribityllumazine synthase (158 aa).

5-amino-6-(D-ribitylamino)uracil is bound by residues Phe24, 58-60 (AFE), and 82-84 (AVI). 87-88 (GT) is a binding site for (2S)-2-hydroxy-3-oxobutyl phosphate. Catalysis depends on His90, which acts as the Proton donor. Residue Phe115 coordinates 5-amino-6-(D-ribitylamino)uracil. Arg129 serves as a coordination point for (2S)-2-hydroxy-3-oxobutyl phosphate.

It belongs to the DMRL synthase family. Forms an icosahedral capsid composed of 60 subunits, arranged as a dodecamer of pentamers.

The catalysed reaction is (2S)-2-hydroxy-3-oxobutyl phosphate + 5-amino-6-(D-ribitylamino)uracil = 6,7-dimethyl-8-(1-D-ribityl)lumazine + phosphate + 2 H2O + H(+). It functions in the pathway cofactor biosynthesis; riboflavin biosynthesis; riboflavin from 2-hydroxy-3-oxobutyl phosphate and 5-amino-6-(D-ribitylamino)uracil: step 1/2. Catalyzes the formation of 6,7-dimethyl-8-ribityllumazine by condensation of 5-amino-6-(D-ribitylamino)uracil with 3,4-dihydroxy-2-butanone 4-phosphate. This is the penultimate step in the biosynthesis of riboflavin. This is 6,7-dimethyl-8-ribityllumazine synthase from Pseudomonas paraeruginosa (strain DSM 24068 / PA7) (Pseudomonas aeruginosa (strain PA7)).